Here is a 298-residue protein sequence, read N- to C-terminus: UDP-N-acetylenolpyruvoylglucosamine reductase (298 aa).

Positions 27–191 (TGGEADVFVM…LDATFSLALE (165 aa)) constitute an FAD-binding PCMH-type domain. Residue Arg-170 is part of the active site. Catalysis depends on Ser-220, which acts as the Proton donor. Residue Glu-290 is part of the active site.

This sequence belongs to the MurB family. FAD is required as a cofactor.

It localises to the cytoplasm. It catalyses the reaction UDP-N-acetyl-alpha-D-muramate + NADP(+) = UDP-N-acetyl-3-O-(1-carboxyvinyl)-alpha-D-glucosamine + NADPH + H(+). The protein operates within cell wall biogenesis; peptidoglycan biosynthesis. In terms of biological role, cell wall formation. The sequence is that of UDP-N-acetylenolpyruvoylglucosamine reductase from Listeria monocytogenes serotype 4a (strain HCC23).